A 385-amino-acid polypeptide reads, in one-letter code: Succinyl-diaminopimelate desuccinylase (385 aa).

Position 73 (His73) interacts with Zn(2+). The active site involves Asp75. Residue Asp106 coordinates Zn(2+). Glu141 serves as the catalytic Proton acceptor. Zn(2+)-binding residues include Glu142, Glu170, and His359.

The protein belongs to the peptidase M20A family. DapE subfamily. In terms of assembly, homodimer. It depends on Zn(2+) as a cofactor. The cofactor is Co(2+).

It catalyses the reaction N-succinyl-(2S,6S)-2,6-diaminopimelate + H2O = (2S,6S)-2,6-diaminopimelate + succinate. It participates in amino-acid biosynthesis; L-lysine biosynthesis via DAP pathway; LL-2,6-diaminopimelate from (S)-tetrahydrodipicolinate (succinylase route): step 3/3. Catalyzes the hydrolysis of N-succinyl-L,L-diaminopimelic acid (SDAP), forming succinate and LL-2,6-diaminopimelate (DAP), an intermediate involved in the bacterial biosynthesis of lysine and meso-diaminopimelic acid, an essential component of bacterial cell walls. This Methylorubrum extorquens (strain CM4 / NCIMB 13688) (Methylobacterium extorquens) protein is Succinyl-diaminopimelate desuccinylase.